Consider the following 225-residue polypeptide: Peptidyl-tRNA hydrolase (225 aa).

TRNA is bound at residue Tyr27. Catalysis depends on His32, which acts as the Proton acceptor. The tRNA site is built by Tyr78, Asn80, and Asn126. The segment at 198-225 is disordered; the sequence is FNPLDFSGPDRQDQPAPLNPAKTAPGES.

The protein belongs to the PTH family. As to quaternary structure, monomer.

Its subcellular location is the cytoplasm. It catalyses the reaction an N-acyl-L-alpha-aminoacyl-tRNA + H2O = an N-acyl-L-amino acid + a tRNA + H(+). In terms of biological role, hydrolyzes ribosome-free peptidyl-tRNAs (with 1 or more amino acids incorporated), which drop off the ribosome during protein synthesis, or as a result of ribosome stalling. Functionally, catalyzes the release of premature peptidyl moieties from peptidyl-tRNA molecules trapped in stalled 50S ribosomal subunits, and thus maintains levels of free tRNAs and 50S ribosomes. The sequence is that of Peptidyl-tRNA hydrolase from Synechococcus sp. (strain JA-3-3Ab) (Cyanobacteria bacterium Yellowstone A-Prime).